Reading from the N-terminus, the 525-residue chain is Ribonuclease Y (525 aa).

Residues 3 to 23 (IFFISLVLIVLASVVFFVGGF) traverse the membrane as a helical segment. The KH domain occupies 215-300 (ALSVVHIQSD…KAYEDAKKEI (86 aa)). The HD domain occupies 341-433 (LLQHSREVAM…VDAANVISLS (93 aa)).

Belongs to the RNase Y family.

It is found in the cell membrane. In terms of biological role, endoribonuclease that initiates mRNA decay. In Chlorobium phaeobacteroides (strain DSM 266 / SMG 266 / 2430), this protein is Ribonuclease Y.